An 85-amino-acid polypeptide reads, in one-letter code: Large ribosomal subunit protein bL27 (85 aa).

The disordered stretch occupies residues 1-20; that stretch reads MAHKKAGGSTRNGRDSEAKR.

Belongs to the bacterial ribosomal protein bL27 family.

The sequence is that of Large ribosomal subunit protein bL27 from Klebsiella pneumoniae (strain 342).